Reading from the N-terminus, the 392-residue chain is GTPase Obg (392 aa).

The Obg domain maps to 1–159 (MKFIDEALIR…RDLQLELMLL (159 aa)). In terms of domain architecture, OBG-type G spans 160 to 333 (ADVGMLGLPN…LCRDIMDFIE (174 aa)). GTP contacts are provided by residues 166 to 173 (GLPNAGKS), 191 to 195 (FTTLV), 213 to 216 (DIPG), 283 to 286 (NKID), and 314 to 316 (SAA). 2 residues coordinate Mg(2+): Ser173 and Thr193. Residues 362–392 (EQVFTEDDQEGDDWDDWSEDDEEGVEIIYKP) are disordered. Residues 365–386 (FTEDDQEGDDWDDWSEDDEEGV) are compositionally biased toward acidic residues.

The protein belongs to the TRAFAC class OBG-HflX-like GTPase superfamily. OBG GTPase family. As to quaternary structure, monomer. It depends on Mg(2+) as a cofactor.

It localises to the cytoplasm. Its function is as follows. An essential GTPase which binds GTP, GDP and possibly (p)ppGpp with moderate affinity, with high nucleotide exchange rates and a fairly low GTP hydrolysis rate. Plays a role in control of the cell cycle, stress response, ribosome biogenesis and in those bacteria that undergo differentiation, in morphogenesis control. The polypeptide is GTPase Obg (Histophilus somni (strain 129Pt) (Haemophilus somnus)).